We begin with the raw amino-acid sequence, 186 residues long: Methyl-CpG-binding domain protein 3-like 1 (186 aa).

A transcription repressor region spans residues 1–104 (MGKTSQRKQC…TSTDTVASAS (104 aa)).

This sequence belongs to the MBD3L family. As to expression, highly expressed in testis. Not detected in the other tissues tested.

Its subcellular location is the nucleus. Functionally, transcriptional repressor. This Mus musculus (Mouse) protein is Methyl-CpG-binding domain protein 3-like 1 (Mbd3l1).